The chain runs to 238 residues: SH2 domain-containing adapter protein F (238 aa).

Disordered stretches follow at residues 1 to 70 and 85 to 121; these read MEPY…PWEW and GSEN…EPSS. Phosphoserine is present on Ser39. Acidic residues predominate over residues 55–66; that stretch reads EDDERPPEEYDQ. Tyr64 is modified (phosphotyrosine). Residues 138–233 form the SH2 domain; sequence WYHGAISRTD…AEHMSLLYPV (96 aa).

As to quaternary structure, interacts with phosphorylated 'Tyr-720' of PDGFRA via its SH2 domain. Post-translationally, may become phosphorylated upon binding to PDGFRA.

Adapter protein which may play a role in the regulation of apoptosis in response to PDGF. In Mus musculus (Mouse), this protein is SH2 domain-containing adapter protein F.